The following is a 178-amino-acid chain: ATP synthase subunit delta (178 aa).

Belongs to the ATPase delta chain family. As to quaternary structure, F-type ATPases have 2 components, F(1) - the catalytic core - and F(0) - the membrane proton channel. F(1) has five subunits: alpha(3), beta(3), gamma(1), delta(1), epsilon(1). F(0) has three main subunits: a(1), b(2) and c(10-14). The alpha and beta chains form an alternating ring which encloses part of the gamma chain. F(1) is attached to F(0) by a central stalk formed by the gamma and epsilon chains, while a peripheral stalk is formed by the delta and b chains.

It is found in the cell membrane. Its function is as follows. F(1)F(0) ATP synthase produces ATP from ADP in the presence of a proton or sodium gradient. F-type ATPases consist of two structural domains, F(1) containing the extramembraneous catalytic core and F(0) containing the membrane proton channel, linked together by a central stalk and a peripheral stalk. During catalysis, ATP synthesis in the catalytic domain of F(1) is coupled via a rotary mechanism of the central stalk subunits to proton translocation. Functionally, this protein is part of the stalk that links CF(0) to CF(1). It either transmits conformational changes from CF(0) to CF(1) or is implicated in proton conduction. The chain is ATP synthase subunit delta from Streptococcus pyogenes serotype M2 (strain MGAS10270).